We begin with the raw amino-acid sequence, 185 residues long: Ribosome-recycling factor (185 aa).

The protein belongs to the RRF family.

Its subcellular location is the cytoplasm. In terms of biological role, responsible for the release of ribosomes from messenger RNA at the termination of protein biosynthesis. May increase the efficiency of translation by recycling ribosomes from one round of translation to another. This Myxococcus xanthus (strain DK1622) protein is Ribosome-recycling factor.